A 57-amino-acid polypeptide reads, in one-letter code: uncharacterized protein (57 aa).

A compositionally biased stretch (basic and acidic residues) spans 1-10; the sequence is MKRSRTEVGR. The interval 1–25 is disordered; sequence MKRSRTEVGRWRMQRQASRRKSRWL.

It belongs to the YciY family.

This is an uncharacterized protein from Escherichia coli O1:K1 / APEC.